A 286-amino-acid chain; its full sequence is Serine carboxypeptidase-like (286 aa).

The active site involves serine 4. 2 cysteine pairs are disulfide-bonded: cysteine 83–cysteine 98 and cysteine 121–cysteine 126. The active site involves aspartate 193. Cysteine 196 serves as a coordination point for substrate. Residue asparagine 227 is glycosylated (N-linked (GlcNAc...) asparagine). Histidine 250 is an active-site residue.

Belongs to the peptidase S10 family.

Functionally, involved in degradation of small peptides. The sequence is that of Serine carboxypeptidase-like from Pisum sativum (Garden pea).